The primary structure comprises 455 residues: Probable glycine dehydrogenase (decarboxylating) subunit 1 (455 aa).

This sequence belongs to the GcvP family. N-terminal subunit subfamily. In terms of assembly, the glycine cleavage system is composed of four proteins: P, T, L and H. In this organism, the P 'protein' is a heterodimer of two subunits.

It catalyses the reaction N(6)-[(R)-lipoyl]-L-lysyl-[glycine-cleavage complex H protein] + glycine + H(+) = N(6)-[(R)-S(8)-aminomethyldihydrolipoyl]-L-lysyl-[glycine-cleavage complex H protein] + CO2. In terms of biological role, the glycine cleavage system catalyzes the degradation of glycine. The P protein binds the alpha-amino group of glycine through its pyridoxal phosphate cofactor; CO(2) is released and the remaining methylamine moiety is then transferred to the lipoamide cofactor of the H protein. The chain is Probable glycine dehydrogenase (decarboxylating) subunit 1 from Francisella tularensis subsp. mediasiatica (strain FSC147).